The following is a 152-amino-acid chain: S-protein homolog 4 (152 aa).

Positions 1 to 23 (MTTMLKTQVHVVVIYLLIQIAFS) are cleaved as a signal peptide. The N-linked (GlcNAc...) asparagine glycan is linked to Asn-71.

The protein belongs to the plant self-incompatibility (S1) protein family.

The protein resides in the secreted. The protein is S-protein homolog 4 of Arabidopsis thaliana (Mouse-ear cress).